Reading from the N-terminus, the 94-residue chain is DNA-directed RNA polymerase subunit omega (94 aa).

Belongs to the RNA polymerase subunit omega family. In terms of assembly, the RNAP catalytic core consists of 2 alpha, 1 beta, 1 beta' and 1 omega subunit. When a sigma factor is associated with the core the holoenzyme is formed, which can initiate transcription.

It carries out the reaction RNA(n) + a ribonucleoside 5'-triphosphate = RNA(n+1) + diphosphate. Its function is as follows. Promotes RNA polymerase assembly. Latches the N- and C-terminal regions of the beta' subunit thereby facilitating its interaction with the beta and alpha subunits. This is DNA-directed RNA polymerase subunit omega from Tolumonas auensis (strain DSM 9187 / NBRC 110442 / TA 4).